The primary structure comprises 200 residues: Lipopolysaccharide core heptose(II)-phosphate phosphatase (200 aa).

Positions 1–25 (MLAFCRSSLKSKKYFIILLALAAIA) are cleaved as a signal peptide.

Belongs to the phosphoglycerate mutase family. Ais subfamily.

It localises to the periplasm. It participates in bacterial outer membrane biogenesis; lipopolysaccharide metabolism. Functionally, catalyzes the dephosphorylation of heptose(II) of the outer membrane lipopolysaccharide core. The polypeptide is Lipopolysaccharide core heptose(II)-phosphate phosphatase (Escherichia coli O6:H1 (strain CFT073 / ATCC 700928 / UPEC)).